A 316-amino-acid polypeptide reads, in one-letter code: Probable 5-dehydro-4-deoxyglucarate dehydratase (316 aa).

The protein belongs to the DapA family.

It carries out the reaction 5-dehydro-4-deoxy-D-glucarate + H(+) = 2,5-dioxopentanoate + CO2 + H2O. The protein operates within carbohydrate acid metabolism; D-glucarate degradation; 2,5-dioxopentanoate from D-glucarate: step 2/2. In Corynebacterium glutamicum (strain R), this protein is Probable 5-dehydro-4-deoxyglucarate dehydratase.